Reading from the N-terminus, the 556-residue chain is Beta-hexosaminidase subunit beta (556 aa).

An N-terminal signal peptide occupies residues 1–42; that stretch reads MELCGLGLPRPPMLLALLLATLLAAMLALLTQVALVVQVAEA. Residues 43 to 121 constitute a propeptide that is removed on maturation; that stretch reads ARAPSVSAKP…HHEPAEFQAK (79 aa). Asn-84 is a glycosylation site (N-linked (GlcNAc...) asparagine). A disulfide bridge links Cys-91 with Cys-137. N-linked (GlcNAc...) asparagine glycans are attached at residues Asn-142, Asn-190, and Asn-327. Cystine bridges form between Cys-309–Cys-360 and Cys-534–Cys-551. Glu-355 serves as the catalytic Proton donor.

This sequence belongs to the glycosyl hydrolase 20 family. In terms of assembly, there are 3 forms of beta-hexosaminidase: hexosaminidase A is a heterodimer composed of one subunit alpha and one subunit beta (chain A and B); hexosaminidase B is a homodimer of two beta subunits (two chains A and B); hexosaminidase S is a homodimer of two alpha subunits. The composition of the dimer (isozyme A versus isozyme S) has a significant effect on the substrate specificity of the alpha subunit active site. Post-translationally, N-linked glycans at Asn-142 and Asn-190 consist of Man(3)-GlcNAc(2) and Man(5 to 7)-GlcNAc(2), respectively. In terms of processing, the beta-A and beta-B chains are produced by proteolytic processing of the precursor beta chain.

It localises to the lysosome. The protein localises to the cytoplasmic vesicle. The protein resides in the secretory vesicle. It is found in the cortical granule. It carries out the reaction Hydrolysis of terminal non-reducing N-acetyl-D-hexosamine residues in N-acetyl-beta-D-hexosaminides.. The catalysed reaction is N-acetyl-beta-D-galactosaminyl-(1-&gt;4)-beta-D-3-sulfogalactosyl-(1-&gt;4)-beta-D-glucosyl-(1&lt;-&gt;1')-ceramide + H2O = a beta-D-3-sulfogalactosyl-(1-&gt;4)-beta-D-glucosyl-(1&lt;-&gt;1')-ceramide + N-acetyl-beta-D-galactosamine. It catalyses the reaction a ganglioside GM2 (d18:1(4E)) + H2O = a ganglioside GM3 (d18:1(4E)) + N-acetyl-beta-D-galactosamine. The enzyme catalyses a ganglioside GM2 + H2O = a ganglioside GM3 + N-acetyl-beta-D-galactosamine. It carries out the reaction beta-D-GalNAc-(1-&gt;4)-alpha-L-IdoA-(1-&gt;3)-beta-D-GalNAc-4-sulfate-(1-&gt;4)-alpha-L-IdoA-(1-&gt;3)-D-GalNAc-4-sulfate + H2O = alpha-L-IdoA-(1-&gt;3)-beta-D-GalNAc-4-sulfate-(1-&gt;4)-alpha-L-IdoA-(1-&gt;3)-D-GalNAc-4-sulfate + N-acetyl-D-galactosamine. The catalysed reaction is N-acetyl-beta-D-6-sulfogalactosaminyl-(1-&gt;4)-alpha-L-iduronyl-(1-&gt;3)-N-acetyl-D-6-sulfogalactosamine + H2O = alpha-L-iduronyl-(1-&gt;3)-N-acetyl-D-6-sulfogalactosamine + N-acetyl-D-6-sulfogalactosamine. With respect to regulation, addition of GM2A stimulates the hydrolysis of sulfated glycosphingolipid SM2 and the ganglioside GM2. Hydrolyzes the non-reducing end N-acetyl-D-hexosamine and/or sulfated N-acetyl-D-hexosamine of glycoconjugates, such as the oligosaccharide moieties from proteins and neutral glycolipids, or from certain mucopolysaccharides. The isozyme B does not hydrolyze each of these substrates, however hydrolyzes efficiently neutral oligosaccharide. Only the isozyme A is responsible for the degradation of GM2 gangliosides in the presence of GM2A. During fertilization is responsible, at least in part, for the zona block to polyspermy. Present in the cortical granules of non-activated oocytes, is exocytosed during the cortical reaction in response to oocyte activation and inactivates the sperm galactosyltransferase-binding site, accounting for the block in sperm binding to the zona pellucida. This Homo sapiens (Human) protein is Beta-hexosaminidase subunit beta.